A 228-amino-acid chain; its full sequence is UPF0173 metal-dependent hydrolase Smar_0891 (228 aa).

This sequence belongs to the UPF0173 family.

This chain is UPF0173 metal-dependent hydrolase Smar_0891, found in Staphylothermus marinus (strain ATCC 43588 / DSM 3639 / JCM 9404 / F1).